The following is a 241-amino-acid chain: MTALPAASITSSALDDLDALNAQLEGLRADERVAWALQHGPQDAALSSSFGAQSAVTLHLLSQQRPDIPVILIDTGYLFPETYRFADALTERLKLNLKVYRPLVSRAWMEARHGRLWEQGMVGIDQYNNLRKVEPMRRALDELNVGTWFTGLRRSQSGGRAQTPIVQKRGERYKISPIADWTDRDVWQYLQAHELPYHPLWEQGYVSIGDFHTTRRWEPGMREEDTRFFGLKRECGIHEDI.

Cysteine 235 serves as the catalytic Nucleophile; cysteine thiosulfonate intermediate.

Belongs to the PAPS reductase family. CysH subfamily.

The protein localises to the cytoplasm. The enzyme catalyses [thioredoxin]-disulfide + sulfite + adenosine 3',5'-bisphosphate + 2 H(+) = [thioredoxin]-dithiol + 3'-phosphoadenylyl sulfate. Its pathway is sulfur metabolism; hydrogen sulfide biosynthesis; sulfite from sulfate: step 3/3. Catalyzes the formation of sulfite from phosphoadenosine 5'-phosphosulfate (PAPS) using thioredoxin as an electron donor. The protein is Phosphoadenosine 5'-phosphosulfate reductase of Xanthomonas oryzae pv. oryzae (strain MAFF 311018).